Reading from the N-terminus, the 420-residue chain is Serine hydroxymethyltransferase (420 aa).

(6S)-5,6,7,8-tetrahydrofolate contacts are provided by residues Leu123 and 127-129 (GHL). Lys232 carries the N6-(pyridoxal phosphate)lysine modification. 357–359 (SPF) lines the (6S)-5,6,7,8-tetrahydrofolate pocket.

It belongs to the SHMT family. In terms of assembly, homodimer. Requires pyridoxal 5'-phosphate as cofactor.

The protein localises to the cytoplasm. It catalyses the reaction (6R)-5,10-methylene-5,6,7,8-tetrahydrofolate + glycine + H2O = (6S)-5,6,7,8-tetrahydrofolate + L-serine. The protein operates within one-carbon metabolism; tetrahydrofolate interconversion. Its pathway is amino-acid biosynthesis; glycine biosynthesis; glycine from L-serine: step 1/1. In terms of biological role, catalyzes the reversible interconversion of serine and glycine with tetrahydrofolate (THF) serving as the one-carbon carrier. This reaction serves as the major source of one-carbon groups required for the biosynthesis of purines, thymidylate, methionine, and other important biomolecules. Also exhibits THF-independent aldolase activity toward beta-hydroxyamino acids, producing glycine and aldehydes, via a retro-aldol mechanism. This chain is Serine hydroxymethyltransferase, found in Streptococcus pyogenes serotype M12 (strain MGAS2096).